Reading from the N-terminus, the 360-residue chain is D-alanine--D-alanine ligase (360 aa).

Residues Lys-146–Gln-352 enclose the ATP-grasp domain. Glu-179–Glu-234 is an ATP binding site. 3 residues coordinate Mg(2+): Asp-305, Glu-319, and Asn-321.

The protein belongs to the D-alanine--D-alanine ligase family. Requires Mg(2+) as cofactor. It depends on Mn(2+) as a cofactor.

Its subcellular location is the cytoplasm. The enzyme catalyses 2 D-alanine + ATP = D-alanyl-D-alanine + ADP + phosphate + H(+). It functions in the pathway cell wall biogenesis; peptidoglycan biosynthesis. Functionally, cell wall formation. This is D-alanine--D-alanine ligase from Pelodictyon phaeoclathratiforme (strain DSM 5477 / BU-1).